Reading from the N-terminus, the 136-residue chain is Globin CTP-III (136 aa).

One can recognise a Globin domain in the interval 1–136 (LSADQISTVQ…TFFGMIFSKM (136 aa)). Residue histidine 87 coordinates heme b.

The protein belongs to the globin family. In terms of assembly, monomer.

This is Globin CTP-III from Chironomus thummi piger (Midge).